Reading from the N-terminus, the 268-residue chain is Taurine import ATP-binding protein TauB (268 aa).

One can recognise an ABC transporter domain in the interval 4 to 236 (LSINNLSMRF…LGVDSDLREV (233 aa)). Residue 41–48 (GPSGCGKT) participates in ATP binding.

The protein belongs to the ABC transporter superfamily. Taurine importer (TC 3.A.1.17.1) family. In terms of assembly, the complex is composed of two ATP-binding proteins (TauB), two transmembrane proteins (TauC) and a solute-binding protein (TauA).

It is found in the cell inner membrane. The enzyme catalyses taurine(out) + ATP + H2O = taurine(in) + ADP + phosphate + H(+). Functionally, part of the ABC transporter complex TauABC involved in taurine import. Responsible for energy coupling to the transport system. This chain is Taurine import ATP-binding protein TauB, found in Roseobacter denitrificans (strain ATCC 33942 / OCh 114) (Erythrobacter sp. (strain OCh 114)).